A 333-amino-acid polypeptide reads, in one-letter code: MQISVNEFLTPRHIDVQVVSPTRAKITLEPLERGFGHTLGNALRRILLSSMPGCAVVEAEIDGVLHEYSAIEGVQEDVIEILLNLKGLAIKLHGRDEVTLTLSKKGSGVVTAADIQLDHDVEIVNPDHVIANLASNGALNMKLTVARGRGYEPADSRQTDEDESRSIGRLQLDASFSPVRRIAYVVENARVEQRTNLDKLVIDLETNGTLDPEEAIRRAATILQQQLAAFVDLKGDSEPVVVEQEDEIDPILLRPVDDLELTVRSANCLKAENIYYIGDLIQRTEVELLKTPNLGKKSLTEIKDVLASRGLSLGMRLDNWPPASLKKDDKATA.

The segment at 1–234 (MQISVNEFLT…QQLAAFVDLK (234 aa)) is alpha N-terminal domain (alpha-NTD). The segment at 248-333 (IDPILLRPVD…SLKKDDKATA (86 aa)) is alpha C-terminal domain (alpha-CTD).

The protein belongs to the RNA polymerase alpha chain family. In terms of assembly, homodimer. The RNAP catalytic core consists of 2 alpha, 1 beta, 1 beta' and 1 omega subunit. When a sigma factor is associated with the core the holoenzyme is formed, which can initiate transcription.

The catalysed reaction is RNA(n) + a ribonucleoside 5'-triphosphate = RNA(n+1) + diphosphate. Functionally, DNA-dependent RNA polymerase catalyzes the transcription of DNA into RNA using the four ribonucleoside triphosphates as substrates. The sequence is that of DNA-directed RNA polymerase subunit alpha from Pseudomonas entomophila (strain L48).